A 164-amino-acid chain; its full sequence is MLSYNIDIGGITALSIMTELATSHKTKIVIANYLEIVPTIANPNSLFMYMYDDIKQCIYINFSIPETLKIFSEAKNNARKALQNSDGLIIPGNVNMVDARLFGEVISPNDVKLHNLERNIAEMALIHVATQRGIPILGICGGIKFLILILVARSVITVKIIIYM.

The 126-residue stretch at 39–164 (TIANPNSLFM…VITVKIIIYM (126 aa)) folds into the Glutamine amidotransferase type-1 domain.

The polypeptide is Putative glutamine amidotransferase-like protein RP713 (Rickettsia prowazekii (strain Madrid E)).